The chain runs to 251 residues: Small ribosomal subunit protein uS3 (251 aa).

Residues 39–111 enclose the KH type-2 domain; it reads IRELINNFSK…DVDLNILEVK (73 aa).

This sequence belongs to the universal ribosomal protein uS3 family. As to quaternary structure, part of the 30S ribosomal subunit. Forms a tight complex with proteins S10 and S14.

In terms of biological role, binds the lower part of the 30S subunit head. Binds mRNA in the 70S ribosome, positioning it for translation. The polypeptide is Small ribosomal subunit protein uS3 (Phytoplasma sp. (strain STRAWB1)).